We begin with the raw amino-acid sequence, 208 residues long: Uracil phosphoribosyltransferase (208 aa).

5-phospho-alpha-D-ribose 1-diphosphate contacts are provided by residues Arg78, Arg103, and Asp130–Thr138. Uracil is bound by residues Ile193 and Gly198 to Ala200. Asp199 is a binding site for 5-phospho-alpha-D-ribose 1-diphosphate.

This sequence belongs to the UPRTase family. Requires Mg(2+) as cofactor.

It catalyses the reaction UMP + diphosphate = 5-phospho-alpha-D-ribose 1-diphosphate + uracil. It functions in the pathway pyrimidine metabolism; UMP biosynthesis via salvage pathway; UMP from uracil: step 1/1. With respect to regulation, allosterically activated by GTP. In terms of biological role, catalyzes the conversion of uracil and 5-phospho-alpha-D-ribose 1-diphosphate (PRPP) to UMP and diphosphate. The chain is Uracil phosphoribosyltransferase from Campylobacter curvus (strain 525.92).